A 584-amino-acid polypeptide reads, in one-letter code: DNA mismatch repair protein MutL (584 aa).

It belongs to the DNA mismatch repair MutL/HexB family.

In terms of biological role, this protein is involved in the repair of mismatches in DNA. It is required for dam-dependent methyl-directed DNA mismatch repair. May act as a 'molecular matchmaker', a protein that promotes the formation of a stable complex between two or more DNA-binding proteins in an ATP-dependent manner without itself being part of a final effector complex. This chain is DNA mismatch repair protein MutL, found in Syntrophomonas wolfei subsp. wolfei (strain DSM 2245B / Goettingen).